The sequence spans 332 residues: Trace amine-associated receptor 1 (332 aa).

Topologically, residues 1 to 23 (MHLCHAITNISHRNSDWSREVQA) are extracellular. Asparagine 9 carries N-linked (GlcNAc...) asparagine glycosylation. Residues 24-48 (SLYSLMSLIILATLVGNLIVIISIS) form a helical membrane-spanning segment. The Cytoplasmic portion of the chain corresponds to 49 to 58 (HFKQLHTPTN). Residues 59 to 80 (WLLHSMAIVDFLLGCLIMPCSM) form a helical membrane-spanning segment. Topologically, residues 81–95 (VRTVERCWYFGEILC) are extracellular. Cysteine 95 and cysteine 181 are oxidised to a cystine. A helical transmembrane segment spans residues 96–118 (KVHTSTDIMLSSASIFHLAFISI). A 2-phenylethylamine-binding site is contributed by aspartate 102. The Cytoplasmic segment spans residues 119 to 138 (DRYCAVCDPLRYKAKINIST). A helical transmembrane segment spans residues 139–160 (ILVMILVSWSLPAVYAFGMIFL). The Extracellular segment spans residues 161–187 (ELNLKGVEELYRSQVSDLGGCSPFFSK). An extracellular Loop 2 (ECL2) region spans residues 174 to 185 (QVSDLGGCSPFF). Residues 188–210 (VSGVLAFMTSFYIPGSVMLFVYY) form a helical membrane-spanning segment. Residues 211-246 (RIYFIAKGQARSINRTNVQVGLEGKSQAPQSKETKA) lie on the Cytoplasmic side of the membrane. A helical transmembrane segment spans residues 247-270 (AKTLGIMVGVFLVCWCPFFLCTVL). The Extracellular portion of the chain corresponds to 271–283 (DPFLGYVIPPSLN). A helical membrane pass occupies residues 284-304 (DALYWFGYLNSALNPMVYAFF). Residues 305-332 (YPWFRRALKMVLLGKIFQKDSSRSKLFL) lie on the Cytoplasmic side of the membrane.

The protein belongs to the G-protein coupled receptor 1 family. As to expression, widely distributed throughout the brain. Strongly expressed in the mitral cell layer of the olfactory bulb, piriform cortex, the arcuate, motor, and mesencephalic trigeminal nuclei, lateral reticular and hypoglossal nuclei, cerebellar Purkinje cells, and ventral horn of the spinal cord. Moderately expressed in the frontal, entorhinal, and agranular cortices, the ventral pallidum, thalamus, hippocampus, several hypothalamic nuclei, ambiguus, dorsal raphe, and gigantocellular reticular nuclei. Weakly expressed in the septum, basal ganglia, amygdala, myelencephalon, and spinal cord dorsal horn. Particularly interesting is the moderate expression in several monoaminergic cell groups, namely the dorsal raphe, the locus coeruleus, and the ventral tegmental area.

It is found in the endomembrane system. The protein resides in the endoplasmic reticulum membrane. Its subcellular location is the cell membrane. Activated by SEP-363856 small molecule: IHCH-7179 acts both as an agonist activator for HTR1A and TAAR1. Its function is as follows. Intracellular G-protein coupled receptor for trace amines, which recognizes endogenous amine-containing metabolites such as beta-phenylethylamine (beta-PEA), 3-iodothyronamine (T1AM), isoamylamine (IAA), cadaverine (CAD), cyclohexylamine (CHA), p-tyramine (p-TYR), trimethylamine (TMA), octopamine and tryptamine. Also functions as a receptor for various drugs and psychoactive substances, such as amphetamine and methamphetamine. Unresponsive to classical biogenic amines, such as epinephrine and histamine and only partially activated by dopamine and serotonin. Expressed in both the central and peripheral nervous system: TAAR1 activation regulates the activity of several neurotransmitter signaling pathways by (1) decreasing the basal firing rates of the neurons involved and by (2) lowering the sensitivity of receptors to neurotransmitters. Ligand binding causes a conformation change that triggers signaling via guanine nucleotide-binding proteins (G proteins) and modulates the activity of downstream effectors. TAAR1 is coupled with different G(i)/G(o)-, G(s)- or G(q)/G(11) classes of G alpha proteins depending on the ligand. CAD-binding is coupled to G(i)/G(o) G alpha proteins and mediates inhibition of adenylate cyclase activity. T1AM- or beta-PEA-binding is coupled to G(s) G alpha proteins and mediates activation of adenylate cyclase activity. CHA- or IAA-binding is coupled to G(q)/G(11) G alpha proteins and activates phospholipase C-beta, releasing diacylglycerol (DAG) and inositol 1,4,5-trisphosphate (IP3) second messengers. TMA-binding is coupled with all three G(i)/G(o)-, G(s)- or G(q)/G(11) G alpha protein subtypes. In Mus musculus (Mouse), this protein is Trace amine-associated receptor 1.